A 355-amino-acid polypeptide reads, in one-letter code: Meiotic coiled-coil protein 4 (355 aa).

The stretch at 298–338 (QRLSRTEINKEIIEIEKLELEVVQFQMSIANLINTQVEVTN) forms a coiled coil.

It localises to the cytoplasm. Has a role in meiosis. In Schizosaccharomyces pombe (strain 972 / ATCC 24843) (Fission yeast), this protein is Meiotic coiled-coil protein 4 (mcp4).